The chain runs to 27 residues: Antimicrobial peptide 1 (27 aa).

As to expression, expressed by the skin glands.

The protein resides in the secreted. Has very weak antimicrobial activity against Gram-positive bacterium S.aureus and Gram-negative bacterium E.coli and stronger activity against yeast C.albicans. Enhances the antibacterial activity of XT3. Has hemolytic activity against human red blood cells. This Xenopus tropicalis (Western clawed frog) protein is Antimicrobial peptide 1.